Consider the following 139-residue polypeptide: Maintenance of telomere capping protein 7 (139 aa).

2 helical membrane passes run 13-33 and 42-62; these read SHHV…FVLL and FYFL…FVFI. Positions 94 to 121 are disordered; the sequence is RSVANPALPPQKKKKKKKKGTLRTGEVE. Residues 104 to 114 are compositionally biased toward basic residues; that stretch reads QKKKKKKKKGT.

The protein resides in the membrane. Its function is as follows. May be involved in telomere capping. The chain is Maintenance of telomere capping protein 7 (MTC7) from Saccharomyces cerevisiae (strain ATCC 204508 / S288c) (Baker's yeast).